Consider the following 29-residue polypeptide: Cysteine-rich venom protein 25-A (29 aa).

It belongs to the CRISP family. Contains 8 disulfide bonds. As to expression, expressed by the venom gland.

Its subcellular location is the secreted. The sequence is that of Cysteine-rich venom protein 25-A from Naja haje haje (Egyptian cobra).